A 622-amino-acid polypeptide reads, in one-letter code: Vacuolar protein sorting-associated protein 27 (622 aa).

Residues 18 to 149 (SESIPNGDLD…KLISRGIKFP (132 aa)) enclose the VHS domain. At S157 the chain carries Phosphoserine. An FYVE-type; atypical zinc finger spans residues 170-230 (WIDSDACMIC…VCDSCFEDYD (61 aa)). Residues C176, C179, C192, C195, C200, H203, C222, and C225 each coordinate Zn(2+). A disordered region spans residues 236-260 (DSKKSKKHRHKRKKDRDYSTPEDEE). The span at 239-249 (KSKKHRHKRKK) shows a compositional bias: basic residues. The UIM 1 domain occupies 258 to 277 (DEEELIRKAIELSLKESRNS). K294 participates in a covalent cross-link: Glycyl lysine isopeptide (Lys-Gly) (interchain with G-Cter in ubiquitin). The UIM 2 domain maps to 301–320 (EEDPDLKAAIQESLREAEEA). Residues 317–328 (AEEAKLRSERQK) are compositionally biased toward basic and acidic residues. 2 disordered regions span residues 317–348 (AEEAKLRSERQKASRQMQPQQPSPQPQPIHSV) and 462–622 (AESY…LIEL). Polar residues predominate over residues 462 to 500 (AESYQTPPLQQLSSHQYKPQQDVSRQQSVKANSSPTTNI). S495 is modified (phosphoserine). Positions 533–548 (EAEDEGTQAVQDEESS) are enriched in acidic residues. S613 bears the Phosphoserine mark.

This sequence belongs to the VPS27 family. In terms of assembly, component of the ESCRT-0 complex composed of HSE1 and VPS27. Interacts with ENT3 and ENT5, the ESCRT-I subunits VPS23 and VPS28 and with the COPIb subunits SEC27, SEC28 and SEC33. May form a complex composed of VPS27, HSE1 and DOA1. Interacts with DOA1. Interacts with ubiquitin.

The protein resides in the endosome membrane. Functionally, component of the ESCRT-0 complex which is the sorting receptor for ubiquitinated cargo proteins at the multivesicular body (MVB) and recruits ESCRT-I to the MVB outer membrane. Controls exit from the prevacuolar compartment (PVC) in both the forward direction to the vacuole and the return to the Golgi. Allows VPS10 to return to the (trans-Golgi network) TGN from the PVC. Might also function as an alternate adapter in the COPIb clathrin-like coat. In Saccharomyces cerevisiae (strain ATCC 204508 / S288c) (Baker's yeast), this protein is Vacuolar protein sorting-associated protein 27 (VPS27).